The primary structure comprises 366 residues: Glucan organizing enzyme 1 (366 aa).

The Extracellular segment spans residues 1–24 (MLPLWARGGKPIVIPLPQKRHITL). A helical membrane pass occupies residues 25-45 (PALPILLLLLGTGFLLHSLFF). Over 46–366 (PPPPPHPPGK…ETYKKWKRGH (321 aa)) the chain is Cytoplasmic.

It belongs to the glycosyltransferase 32 family.

It localises to the cell membrane. Plays a role in the localization of glycogen rosettes to the plasma membrane. Required for correct cell wall organization and may facilitate the connection between beta-1,3-glucan and beta-1,6-glucan in the cell wall. The protein is Glucan organizing enzyme 1 of Cryptococcus neoformans var. grubii serotype A (strain H99 / ATCC 208821 / CBS 10515 / FGSC 9487) (Filobasidiella neoformans var. grubii).